Here is a 231-residue protein sequence, read N- to C-terminus: 2-C-methyl-D-erythritol 4-phosphate cytidylyltransferase (231 aa).

The protein belongs to the IspD/TarI cytidylyltransferase family. IspD subfamily.

The enzyme catalyses 2-C-methyl-D-erythritol 4-phosphate + CTP + H(+) = 4-CDP-2-C-methyl-D-erythritol + diphosphate. It functions in the pathway isoprenoid biosynthesis; isopentenyl diphosphate biosynthesis via DXP pathway; isopentenyl diphosphate from 1-deoxy-D-xylulose 5-phosphate: step 2/6. Catalyzes the formation of 4-diphosphocytidyl-2-C-methyl-D-erythritol from CTP and 2-C-methyl-D-erythritol 4-phosphate (MEP). The protein is 2-C-methyl-D-erythritol 4-phosphate cytidylyltransferase of Clostridium kluyveri (strain NBRC 12016).